Consider the following 285-residue polypeptide: Phosphatidate cytidylyltransferase (285 aa).

8 helical membrane-spanning segments follow: residues 10–30 (FVLI…GFAI), 56–76 (VWLA…LPEY), 93–113 (LGWW…AAIW), 121–141 (LIFG…LRAW), 151–171 (AIWL…AYMF), 190–210 (WQGF…YGMW), 213–233 (LDVA…ASVL), and 264–284 (IDSL…VFRT).

It belongs to the CDS family.

The protein localises to the cell inner membrane. The catalysed reaction is a 1,2-diacyl-sn-glycero-3-phosphate + CTP + H(+) = a CDP-1,2-diacyl-sn-glycerol + diphosphate. It participates in phospholipid metabolism; CDP-diacylglycerol biosynthesis; CDP-diacylglycerol from sn-glycerol 3-phosphate: step 3/3. In Escherichia coli O157:H7, this protein is Phosphatidate cytidylyltransferase (cdsA).